A 310-amino-acid polypeptide reads, in one-letter code: MPLRLVFMGTPDFAVPTLLALSAYGHDIAAVYSREPKPAGRGMKLQHSPVAQEAQRFGIPVLTPKTLKTDEALAEFRSHDADAAVVVAYGMILPQAILDAPRLGCYNLHGSLLPRWRGAAPLNRAIMAGDAESGVMVMKMDAGLDTGDVAMAERIAITDAMTVTDLHDSLARLGADLMVRAMAALERDQLQLTRQSEHGVTYAAKIDKAEAKIDFARPAQAVLRHIHGLSPFPGAWCELPIDGEAVRVKILRCASATGGGAPGQVLDDRLTIACQDGAIRVLQLQRAGKQPMQADEFLRGTPIAAGAVIV.

111–114 provides a ligand contact to (6S)-5,6,7,8-tetrahydrofolate; the sequence is SLLP.

The protein belongs to the Fmt family.

The catalysed reaction is L-methionyl-tRNA(fMet) + (6R)-10-formyltetrahydrofolate = N-formyl-L-methionyl-tRNA(fMet) + (6S)-5,6,7,8-tetrahydrofolate + H(+). In terms of biological role, attaches a formyl group to the free amino group of methionyl-tRNA(fMet). The formyl group appears to play a dual role in the initiator identity of N-formylmethionyl-tRNA by promoting its recognition by IF2 and preventing the misappropriation of this tRNA by the elongation apparatus. The chain is Methionyl-tRNA formyltransferase from Rhodopseudomonas palustris (strain BisB5).